Consider the following 183-residue polypeptide: Dual specificity protein phosphatase 22-B (183 aa).

The Tyrosine-protein phosphatase domain maps to 4 to 144; it reads GINKVLPDLY…LQEFQTGELQ (141 aa). C88 serves as the catalytic Phosphocysteine intermediate.

The protein belongs to the protein-tyrosine phosphatase family. Non-receptor class dual specificity subfamily.

Its subcellular location is the cytoplasm. It localises to the nucleus. It carries out the reaction O-phospho-L-tyrosyl-[protein] + H2O = L-tyrosyl-[protein] + phosphate. It catalyses the reaction O-phospho-L-seryl-[protein] + H2O = L-seryl-[protein] + phosphate. The catalysed reaction is O-phospho-L-threonyl-[protein] + H2O = L-threonyl-[protein] + phosphate. Activates the Jnk signaling pathway. Dephosphorylates and deactivates p38 and stress-activated protein kinase/c-Jun N-terminal kinase (SAPK/JNK). This is Dual specificity protein phosphatase 22-B (dusp22b) from Danio rerio (Zebrafish).